A 294-amino-acid chain; its full sequence is Ventral anterior homeobox 2b (294 aa).

Residues 1–10 (MGDGVSEERS) show a composition bias toward basic and acidic residues. Disordered stretches follow at residues 1 to 27 (MGDGVSEERSPLCGKSATSCSERVRDR), 43 to 65 (KDIPVTSTSSPGSSKEEVLDSQS), 149 to 168 (RRTKQKKDQSRDSEKRSSST), 190 to 223 (PAPPNMISSQNNMGTSSGNGTSLGTSGSTSPVIS), and 272 to 294 (SSAFEPYTRLDRKDTASGKKSTS). The homeobox DNA-binding region spans 98–157 (PKRTRTSFTAEQLYRLELEFQRCQYVVGRERTELARQLNLSETQVKVWFQNRRTKQKKDQ). Over residues 154–165 (KKDQSRDSEKRS) the composition is skewed to basic and acidic residues. Positions 197-219 (SSQNNMGTSSGNGTSLGTSGSTS) are enriched in low complexity. Over residues 279–288 (TRLDRKDTAS) the composition is skewed to basic and acidic residues.

Belongs to the EMX homeobox family.

The protein resides in the nucleus. Functionally, transcription factor that may function in dorsoventral specification of the forebrain. Regulates the expression of Wnt signaling antagonists. The chain is Ventral anterior homeobox 2b (vax2-b) from Xenopus laevis (African clawed frog).